A 1173-amino-acid polypeptide reads, in one-letter code: Protein GIGANTEA (1173 aa).

Disordered regions lie at residues 150-187, 604-641, and 840-863; these read EQQN…RKPL, SGSK…NVKG, and SRTE…SGRP. Composition is skewed to polar residues over residues 162–172 and 613–633; these read SKATTSGSPTS and YAST…QTAN. The span at 854–863 shows a compositional bias: basic and acidic residues; the sequence is RHSDEGSGRP.

The protein belongs to the GIGANTEA family. In terms of assembly, interacts with SPY. Interacts with ADO1 (via N-terminus) and ADO2. Interacts with ADO3 (via N-terminus). Interacts (via N-terminus) with CDF1. Interacts (via N-terminus) with TCP4. In terms of tissue distribution, widely expressed with highest levels in inflorescence apices, young flowers and young siliques.

It is found in the nucleus. Its subcellular location is the cytoplasm. Involved in regulation of circadian rhythm and photoperiodic flowering. May play a role in maintenance of circadian amplitude and period length. Is involved in phytochrome B signaling. Stabilizes ADO3 and the circadian photoreceptor ADO1/ZTL. Regulates 'CONSTANS' (CO) in the long-day flowering pathway by modulating the ADO3-dependent protein stability of CDF1 and CDF2, but is not essential to activate CO transcription. Regulates, via the microRNA miR172, a CO-independent pathway that promotes photoperiodic flowering by inducing 'FLOWERING LOCUS T'. In Arabidopsis thaliana (Mouse-ear cress), this protein is Protein GIGANTEA (GI).